We begin with the raw amino-acid sequence, 233 residues long: Large ribosomal subunit protein uL1 (233 aa).

Belongs to the universal ribosomal protein uL1 family. Part of the 50S ribosomal subunit.

Binds directly to 23S rRNA. The L1 stalk is quite mobile in the ribosome, and is involved in E site tRNA release. Functionally, protein L1 is also a translational repressor protein, it controls the translation of the L11 operon by binding to its mRNA. This is Large ribosomal subunit protein uL1 from Vibrio parahaemolyticus serotype O3:K6 (strain RIMD 2210633).